A 320-amino-acid polypeptide reads, in one-letter code: Malate dehydrogenase (320 aa).

NAD(+) contacts are provided by residues 10-15 and Asp-34; that span reads GSGMIG. Substrate is bound by residues Arg-83 and Arg-89. Residues Asn-96 and 119–121 each bind NAD(+); that span reads ITN. Asn-121 and Arg-152 together coordinate substrate. His-176 (proton acceptor) is an active-site residue.

This sequence belongs to the LDH/MDH superfamily. MDH type 3 family.

The enzyme catalyses (S)-malate + NAD(+) = oxaloacetate + NADH + H(+). Its function is as follows. Catalyzes the reversible oxidation of malate to oxaloacetate. The protein is Malate dehydrogenase of Rhizobium meliloti (strain 1021) (Ensifer meliloti).